Here is a 438-residue protein sequence, read N- to C-terminus: Enolase (438 aa).

Residues His159 and Glu168 each contribute to the substrate site. Glu211 (proton donor) is an active-site residue. The Mg(2+) site is built by Asp246, Glu297, and Asp322. Positions 297 and 322 each coordinate substrate. Lys347 acts as the Proton acceptor in catalysis. Substrate contacts are provided by residues 374–377 and Lys398; that span reads SHRS.

It belongs to the enolase family. As to quaternary structure, homodimer. It depends on Mg(2+) as a cofactor.

The protein resides in the cytoplasm. It carries out the reaction (2R)-2-phosphoglycerate = phosphoenolpyruvate + H2O. It functions in the pathway carbohydrate degradation; glycolysis; pyruvate from D-glyceraldehyde 3-phosphate: step 4/5. The chain is Enolase (ENO1) from Cryphonectria parasitica (Chestnut blight fungus).